Consider the following 223-residue polypeptide: Uridylate kinase (223 aa).

Position 9-10 (9-10 (GS)) interacts with ATP. Residue Gly-43 participates in UMP binding. ATP is bound by residues Gly-44 and Arg-48. UMP-binding positions include Asp-65 and 112–118 (THPGHTT). Residues Thr-137, Asn-138, Tyr-143, and Asp-146 each contribute to the ATP site.

This sequence belongs to the UMP kinase family. In terms of assembly, homohexamer.

It localises to the cytoplasm. The catalysed reaction is UMP + ATP = UDP + ADP. The protein operates within pyrimidine metabolism; CTP biosynthesis via de novo pathway; UDP from UMP (UMPK route): step 1/1. With respect to regulation, inhibited by UTP. Catalyzes the reversible phosphorylation of UMP to UDP. The sequence is that of Uridylate kinase from Methanopyrus kandleri (strain AV19 / DSM 6324 / JCM 9639 / NBRC 100938).